Consider the following 374-residue polypeptide: Nucleosome assembly protein 1;3 (374 aa).

The stretch at 26–80 (VNALKNKLQNLAGQHSDVLENLTPKIRRRVEVLREIQGKHDEIETKFREERAALE) forms a coiled coil. S41 bears the Phosphoserine mark. Residues 47–62 (LTPKIRRRVEVLREIQ) carry the Nuclear export signal motif. Positions 222 to 227 (KKKPKK) match the Nuclear localization signal motif. A compositionally biased stretch (acidic residues) spans 299 to 339 (IEGEEFEIDNDDEDDIDEDEDEDEEDEDEDEEEDDEDEEEE). A disordered region spans residues 299–374 (IEGEEFEIDN…GERPPECKQQ (76 aa)). Residues 343-355 (TKKKPSVLHKKGG) are compositionally biased toward basic residues. Positions 364-374 (QGERPPECKQQ) are enriched in basic and acidic residues. C371 carries the cysteine methyl ester modification. A lipid anchor (S-farnesyl cysteine) is attached at C371. The propeptide at 372 to 374 (KQQ) is removed in mature form.

The protein belongs to the nucleosome assembly protein (NAP) family. Can form homomeric and heteromeric protein complexes with NAP1;1, NAP1;2 and NAP1;4. Binds histone H2A and associates with chromatin in vivo. In terms of tissue distribution, ubiquitous.

It is found in the nucleus. The protein resides in the cytoplasm. Its function is as follows. May modulate chromatin structure by regulation of nucleosome assembly/disassembly. May function in nucleotide excision repair (NER). Involved in somatic homologous recombination. Could be involved in response to abscisic acid (ABA) and to salt stress. The polypeptide is Nucleosome assembly protein 1;3 (NAP1;3) (Arabidopsis thaliana (Mouse-ear cress)).